A 283-amino-acid chain; its full sequence is E3 ubiquitin-protein ligase MARCHF5 (283 aa).

The segment at 9 to 78 (VQQMLDRSCW…PQCNAEYLIV (70 aa)) adopts an RING-CH-type zinc-finger fold. The Zn(2+) site is built by Cys-17, Cys-20, Cys-36, Cys-38, His-46, Cys-49, Cys-68, and Cys-71. 4 consecutive transmembrane segments (helical) span residues 102-122 (FAAA…YGAV), 142-162 (PLFL…GKMI), 212-232 (ILCG…LMFS), and 241-261 (TILG…YFKQ).

It localises to the mitochondrion outer membrane. The protein resides in the endoplasmic reticulum membrane. It carries out the reaction S-ubiquitinyl-[E2 ubiquitin-conjugating enzyme]-L-cysteine + [acceptor protein]-L-lysine = [E2 ubiquitin-conjugating enzyme]-L-cysteine + N(6)-ubiquitinyl-[acceptor protein]-L-lysine.. The protein operates within protein modification; protein ubiquitination. Its function is as follows. Mitochondrial E3 ubiquitin-protein ligase that plays a crucial role in the control of mitochondrial morphology by acting as a positive regulator of mitochondrial fission. May play a role in the prevention of cell senescence acting as a regulator of mitochondrial quality control. The chain is E3 ubiquitin-protein ligase MARCHF5 (marchf5) from Xenopus laevis (African clawed frog).